A 75-amino-acid chain; its full sequence is Meucin-49 (75 aa).

An N-terminal signal peptide occupies residues 1–22; the sequence is MNKKILLVIFIVTMLIVDEVNS.

The protein belongs to the non-disulfide-bridged peptide (NDBP) superfamily. Long chain multifunctional peptide (group 2) family. As to expression, expressed by the venom gland.

The protein resides in the secreted. Functionally, insecticidal toxin and antimicrobial peptide with potent activity against both Gram-negative and -positive bacteria, as well as against fungi. Acts by disrupting bacterial membrane integrity. Shows broad-spectrum and highly potent bactericidal activities against the Gram-positive bacteria B.cereus, B.megaterium, B.subtilis, M.luteus, S.aureus, S.epidermidis, S.warneri, S.griseus, S.scabiei, S.mutans, S.salivarius, and S.sanguinis. Also exhibits a wide spectrum of activity against the Gram-negative bacteria A.faecalis, E.coli, P.aeruginosa, P.solanacearum, S.enterica, S.marcescens, and S.maltophilia. Also shows antimicrobial activities against the fungal strains Aspergillus flavus, A.fumigatus, A.nidulans, A.niger, Beauveria bassiana, and Saccharomyces cerevisiae. Its antibiotic activity is potentiated by other antibacterial peptides such as MeuNaTxbeta-4. Also induces cytolysis on mice, lizards and birds erythrocytes. The sequence is that of Meucin-49 from Mesobuthus eupeus (Lesser Asian scorpion).